The sequence spans 362 residues: Histidinol-phosphate aminotransferase (362 aa).

N6-(pyridoxal phosphate)lysine is present on K222.

Belongs to the class-II pyridoxal-phosphate-dependent aminotransferase family. Histidinol-phosphate aminotransferase subfamily. In terms of assembly, homodimer. Pyridoxal 5'-phosphate serves as cofactor.

The catalysed reaction is L-histidinol phosphate + 2-oxoglutarate = 3-(imidazol-4-yl)-2-oxopropyl phosphate + L-glutamate. The protein operates within amino-acid biosynthesis; L-histidine biosynthesis; L-histidine from 5-phospho-alpha-D-ribose 1-diphosphate: step 7/9. This Shewanella amazonensis (strain ATCC BAA-1098 / SB2B) protein is Histidinol-phosphate aminotransferase.